A 216-amino-acid chain; its full sequence is MMIGLLGRKIGMTRVFTPEGVSVPVSVVEVQPNRVSQVKTAANDGYSAVQLTGGTKKSSKVSKPVAGHFAKAQIDAGDMQVEFRIDSEDAFTPGQVISVADVFTAGQYVDVSGLTKGKGFAGTVKRHNFRTQDASHGNSRSHRVPGSIGQNQTPGRVFKGKKMAGHMGNARCTIQSLELVKVDSERNLLLIKGAIPGAPGSRVEIKPAVKKQARGE.

The interval Gln-132–Gly-155 is disordered. Gln-152 carries the post-translational modification N5-methylglutamine.

Belongs to the universal ribosomal protein uL3 family. Part of the 50S ribosomal subunit. Forms a cluster with proteins L14 and L19. Methylated by PrmB.

Functionally, one of the primary rRNA binding proteins, it binds directly near the 3'-end of the 23S rRNA, where it nucleates assembly of the 50S subunit. The sequence is that of Large ribosomal subunit protein uL3 from Legionella pneumophila (strain Paris).